The sequence spans 1068 residues: Retinoblastoma-like protein 1 (1068 aa).

The residue at position 332 (threonine 332) is a Phosphothreonine; by CDK2. The residue at position 369 (threonine 369) is a Phosphothreonine; by CDK4. Residue threonine 385 is modified to Phosphothreonine; by CDK2. The domain A stretch occupies residues 385 to 584 (TPVASATQSV…WEALQVSANK (200 aa)). Residues 385–949 (TPVASATQSV…GRVKSFALKY (565 aa)) form a pocket; binds T and E1A region. The segment at 585 to 780 (VPTCEEVIFP…AQEVHSTGIN (196 aa)) is spacer. A Phosphoserine; by CDK2 and CDK4 modification is found at serine 640. Serine 650 and serine 749 each carry phosphoserine. Serine 762 carries the phosphoserine; by CDK2 modification. Residues 781 to 949 (RPKRTGSLAL…GRVKSFALKY (169 aa)) form a domain B region. Residues serine 964 and serine 975 each carry the phosphoserine; by CDK2 and CDK4 modification. Serine 988 carries the phosphoserine; by CDK2 modification. Threonine 997 carries the post-translational modification Phosphothreonine; by CDK2. Serine 1009 is subject to Phosphoserine; by CDK2. At serine 1041 the chain carries Phosphoserine.

The protein belongs to the retinoblastoma protein (RB) family. Component of the DREAM complex (also named LINC complex) at least composed of E2F4, E2F5, LIN9, LIN37, LIN52, LIN54, MYBL1, MYBL2, RBL1, RBL2, RBBP4, TFDP1 and TFDP2. The complex exists in quiescent cells where it represses cell cycle-dependent genes. It dissociates in S phase when LIN9, LIN37, LIN52 and LIN54 form a subcomplex that binds to MYBL2. Interacts with AATF. Interacts with KDM5A. Interacts with KMT5B and KMT5C. Interacts with USP4. Interacts with RBBP9. In terms of assembly, (Microbial infection) Interacts with SV40 and JC virus large T antigens. Large T antigen, but not E1A, binds only to the unphosphorylated form. As to quaternary structure, (Microbial infection) Interacts with JC virus small t antigen. In terms of processing, cell-cycle arrest properties are inactivated by phosphorylation on Thr-332, Ser-640, Ser-964 and Ser-975 by CDK4.

The protein localises to the nucleus. Its function is as follows. Key regulator of entry into cell division. Directly involved in heterochromatin formation by maintaining overall chromatin structure and, in particular, that of constitutive heterochromatin by stabilizing histone methylation. Recruits and targets histone methyltransferases KMT5B and KMT5C, leading to epigenetic transcriptional repression. Controls histone H4 'Lys-20' trimethylation. Probably acts as a transcription repressor by recruiting chromatin-modifying enzymes to promoters. Potent inhibitor of E2F-mediated trans-activation. May act as a tumor suppressor. This Homo sapiens (Human) protein is Retinoblastoma-like protein 1 (RBL1).